The chain runs to 330 residues: uncharacterized protein (330 aa).

This is an uncharacterized protein from Archaeoglobus fulgidus (strain ATCC 49558 / DSM 4304 / JCM 9628 / NBRC 100126 / VC-16).